An 887-amino-acid chain; its full sequence is CWF19-like protein 2 (887 aa).

The segment at 1–143 (MEAFSVRFES…DKRTEEECDS (143 aa)) is disordered. Residues 11 to 103 (ASSIEERKEQ…KKQKCQKQSE (93 aa)) are a coiled coil. Positions 14-72 (IEERKEQTRNARAEVLRQAKHNFEKEQRGEERKRLRDEDTWMLPDVHERIEQFSQEHSE) are enriched in basic and acidic residues. S71 bears the Phosphoserine mark. The segment covering 73 to 98 (KKKKKKDKHSKKVKKEKKKKRKKQKC) has biased composition (basic residues). Positions 99–110 (QKQSESTDSSAS) are enriched in low complexity. The span at 124 to 143 (SDKEKTWKVKDKRTEEECDS) shows a compositional bias: basic and acidic residues. The stretch at 164–254 (SSSLKAEKET…RNFEDIVAEK (91 aa)) forms a coiled coil. K168 participates in a covalent cross-link: Glycyl lysine isopeptide (Lys-Gly) (interchain with G-Cter in SUMO2). 2 disordered regions span residues 315-370 (LEME…DEDE) and 405-447 (SEES…GRRE). Residues 342 to 352 (CRRESALRKNQ) show a composition bias toward basic and acidic residues. 2 positions are modified to phosphoserine: S354 and S366. The span at 414–430 (RSDRRQENRKPSDKKPL) shows a compositional bias: basic and acidic residues. The span at 433–442 (WSYNANQHST) shows a compositional bias: polar residues. S478 is modified (phosphoserine). Residues 495 to 524 (IKAEMMGNMELAEQLKAQLKEANKFKETQM) are a coiled coil. K597 is covalently cross-linked (Glycyl lysine isopeptide (Lys-Gly) (interchain with G-Cter in SUMO2)). Position 622 is a phosphoserine (S622).

Belongs to the CWF19 family.

The protein is CWF19-like protein 2 (Cwf19l2) of Mus musculus (Mouse).